The primary structure comprises 513 residues: ATP synthase subunit alpha (513 aa).

An ATP-binding site is contributed by 169–176; the sequence is GDRQTGKT.

This sequence belongs to the ATPase alpha/beta chains family. F-type ATPases have 2 components, CF(1) - the catalytic core - and CF(0) - the membrane proton channel. CF(1) has five subunits: alpha(3), beta(3), gamma(1), delta(1), epsilon(1). CF(0) has three main subunits: a(1), b(2) and c(9-12). The alpha and beta chains form an alternating ring which encloses part of the gamma chain. CF(1) is attached to CF(0) by a central stalk formed by the gamma and epsilon chains, while a peripheral stalk is formed by the delta and b chains.

Its subcellular location is the cell inner membrane. It catalyses the reaction ATP + H2O + 4 H(+)(in) = ADP + phosphate + 5 H(+)(out). Produces ATP from ADP in the presence of a proton gradient across the membrane. The alpha chain is a regulatory subunit. This chain is ATP synthase subunit alpha, found in Shewanella amazonensis (strain ATCC BAA-1098 / SB2B).